The sequence spans 460 residues: Argininosuccinate lyase (460 aa).

It belongs to the lyase 1 family. Argininosuccinate lyase subfamily.

The protein localises to the cytoplasm. It carries out the reaction 2-(N(omega)-L-arginino)succinate = fumarate + L-arginine. It participates in amino-acid biosynthesis; L-arginine biosynthesis; L-arginine from L-ornithine and carbamoyl phosphate: step 3/3. The sequence is that of Argininosuccinate lyase from Lawsonia intracellularis (strain PHE/MN1-00).